The primary structure comprises 482 residues: Glutamyl-tRNA(Gln) amidotransferase subunit A (482 aa).

Active-site charge relay system residues include Lys-74 and Ser-149. The Acyl-ester intermediate role is filled by Ser-173.

Belongs to the amidase family. GatA subfamily. In terms of assembly, heterotrimer of A, B and C subunits.

The enzyme catalyses L-glutamyl-tRNA(Gln) + L-glutamine + ATP + H2O = L-glutaminyl-tRNA(Gln) + L-glutamate + ADP + phosphate + H(+). Functionally, allows the formation of correctly charged Gln-tRNA(Gln) through the transamidation of misacylated Glu-tRNA(Gln) in organisms which lack glutaminyl-tRNA synthetase. The reaction takes place in the presence of glutamine and ATP through an activated gamma-phospho-Glu-tRNA(Gln). This is Glutamyl-tRNA(Gln) amidotransferase subunit A from Prochlorococcus marinus (strain MIT 9215).